The sequence spans 71 residues: Small ribosomal subunit protein bS21 (71 aa).

The span at 48–59 shows a compositional bias: basic residues; it reads KAAAAVKRHAKK. The tract at residues 48-71 is disordered; sequence KAAAAVKRHAKKVQRENRKFQRLY. Positions 60–71 are enriched in basic and acidic residues; it reads VQRENRKFQRLY.

The protein belongs to the bacterial ribosomal protein bS21 family.

The polypeptide is Small ribosomal subunit protein bS21 (Saccharophagus degradans (strain 2-40 / ATCC 43961 / DSM 17024)).